The following is a 478-amino-acid chain: UDP-glycosyltransferase 71B5 (478 aa).

UDP-alpha-D-glucose is bound by residues serine 280, 347-349 (APQ), 364-372 (HCGWNSILE), and 386-389 (YAEQ).

This sequence belongs to the UDP-glycosyltransferase family.

In terms of biological role, possesses low quercetin 3-O-glucosyltransferase activity in vitro. This is UDP-glycosyltransferase 71B5 (UGT71B5) from Arabidopsis thaliana (Mouse-ear cress).